A 460-amino-acid polypeptide reads, in one-letter code: L-seryl-tRNA(Sec) selenium transferase (460 aa).

The residue at position 293 (Lys293) is an N6-(pyridoxal phosphate)lysine.

It belongs to the SelA family. The cofactor is pyridoxal 5'-phosphate.

It localises to the cytoplasm. The catalysed reaction is L-seryl-tRNA(Sec) + selenophosphate + H(+) = L-selenocysteinyl-tRNA(Sec) + phosphate. Its pathway is aminoacyl-tRNA biosynthesis; selenocysteinyl-tRNA(Sec) biosynthesis; selenocysteinyl-tRNA(Sec) from L-seryl-tRNA(Sec) (bacterial route): step 1/1. In terms of biological role, converts seryl-tRNA(Sec) to selenocysteinyl-tRNA(Sec) required for selenoprotein biosynthesis. The sequence is that of L-seryl-tRNA(Sec) selenium transferase from Haemophilus ducreyi (strain 35000HP / ATCC 700724).